Reading from the N-terminus, the 847-residue chain is Putative membrane protein SCO5905 (847 aa).

The next 12 helical transmembrane spans lie at 18–38 (AVVV…APAL), 187–207 (GGDK…LLAI), 215–235 (LVPL…GAIL), 248–268 (ASIM…IITA), 302–322 (IVLA…GFGP), 326–346 (LGVA…VLLL), 381–401 (VKVA…LLGY), 539–559 (DTTL…VLLL), 562–582 (LLAP…TLGA), 600–620 (VTAY…IFIM), 643–663 (TGGV…VLMT), and 672–692 (FGFA…PLLV). Residues 708 to 729 (RPGTPQTPSTPTSEPPSADAPA) are disordered. A run of 3 helical transmembrane segments spans residues 744–764 (FTWI…GMYL), 778–798 (FGTL…LVAI), and 808–828 (TIFA…EIWA).

This sequence belongs to the resistance-nodulation-cell division (RND) (TC 2.A.6) family. MmpL subfamily.

Its subcellular location is the cell membrane. This Streptomyces coelicolor (strain ATCC BAA-471 / A3(2) / M145) protein is Putative membrane protein SCO5905.